A 432-amino-acid polypeptide reads, in one-letter code: Adenylosuccinate synthetase (432 aa).

Residues 13-19 and 41-43 contribute to the GTP site; these read GDEGKGK and GHT. Aspartate 14 acts as the Proton acceptor in catalysis. Mg(2+) contacts are provided by aspartate 14 and glycine 41. Residues 14-17, 39-42, threonine 130, arginine 144, glutamine 225, threonine 240, and arginine 304 each bind IMP; these read DEGK and NAGH. Catalysis depends on histidine 42, which acts as the Proton donor. Position 300-306 (300-306) interacts with substrate; the sequence is AVTGRPR. GTP is bound by residues arginine 306, 332–334, and 415–417; these read KLD and STG.

The protein belongs to the adenylosuccinate synthetase family. Homodimer. The cofactor is Mg(2+).

The protein localises to the cytoplasm. It carries out the reaction IMP + L-aspartate + GTP = N(6)-(1,2-dicarboxyethyl)-AMP + GDP + phosphate + 2 H(+). It functions in the pathway purine metabolism; AMP biosynthesis via de novo pathway; AMP from IMP: step 1/2. Its function is as follows. Plays an important role in the de novo pathway of purine nucleotide biosynthesis. Catalyzes the first committed step in the biosynthesis of AMP from IMP. The chain is Adenylosuccinate synthetase from Histophilus somni (strain 129Pt) (Haemophilus somnus).